We begin with the raw amino-acid sequence, 129 residues long: Glycine cleavage system H protein (129 aa).

Positions 24 to 106 constitute a Lipoyl-binding domain; it reads LLKIGVSEFA…IGDGWLVILK (83 aa). An N6-lipoyllysine modification is found at lysine 65.

The protein belongs to the GcvH family. As to quaternary structure, the glycine cleavage system is composed of four proteins: P, T, L and H. Requires (R)-lipoate as cofactor.

In terms of biological role, the glycine cleavage system catalyzes the degradation of glycine. The H protein shuttles the methylamine group of glycine from the P protein to the T protein. The polypeptide is Glycine cleavage system H protein (Prochlorococcus marinus (strain MIT 9301)).